The following is a 516-amino-acid chain: Beta-glucosidase 1 (516 aa).

A signal peptide spans 1–21; the sequence is MGHRLVVVLLLALLVAGAARA. An a beta-D-glucoside-binding site is contributed by Q68. N96 is a glycosylation site (N-linked (GlcNAc...) asparagine). A beta-D-glucoside is bound by residues H169 and 214–215; that span reads NE. E215 acts as the Proton donor in catalysis. An intrachain disulfide couples C234 to C237. Residue N290 is glycosylated (N-linked (GlcNAc...) asparagine). Y353 is an a beta-D-glucoside binding site. The N-linked (GlcNAc...) asparagine glycan is linked to N364. E424 lines the a beta-D-glucoside pocket. The active-site Nucleophile is E424. N432 is a glycosylation site (N-linked (GlcNAc...) asparagine). Residues W471, 478–479, and F487 contribute to the a beta-D-glucoside site; that span reads EW.

It belongs to the glycosyl hydrolase 1 family.

It carries out the reaction Hydrolysis of terminal, non-reducing beta-D-glucosyl residues with release of beta-D-glucose.. This is Beta-glucosidase 1 (BGLU1) from Oryza sativa subsp. japonica (Rice).